The following is a 413-amino-acid chain: uncharacterized protein (413 aa).

7 helical membrane-spanning segments follow: residues 10-32 (GLTI…GRLP), 162-184 (VFLH…LVFL), 189-211 (LLPR…AFLV), 232-254 (LSFR…LFFF), 259-276 (YSYS…ILLV), 288-310 (ALMV…SFVT), and 325-347 (FAYA…SLIL).

It localises to the cell membrane. This is an uncharacterized protein from Aquifex aeolicus (strain VF5).